Consider the following 452-residue polypeptide: Solute carrier family 52, riboflavin transporter, member 3-B (452 aa).

5 helical membrane passes run 11-31, 38-58, 73-93, 111-131, and 138-158; these read LFGIGSWVAINGMWVELPLIV, WLLPSYLTIIIQMANIGPLFI, PVIYTIVAVGVVATFLLAFLW, LSFLLSVVDCTSSVTFLPFMM, and LTTYFIGEGLSGLVPALVALV. N-linked (GlcNAc...) asparagine glycans are attached at residues Asn168, Asn174, Asn179, and Asn193. A run of 6 helical transmembrane segments spans residues 199-219, 285-305, 321-341, 344-364, 381-401, and 412-432; these read FFLFLSAMMMVCLGAFLLLNL, VFIFVVLAWVNALTNAVLPSV, AATLSSVANPVACFIAMFVPI, LVLMGVLTVTGTGFGAYIMAM, ALIVITWVIFVLSLSYVKVII, and ALVWCGAVVQLGSMLGALSMF.

Belongs to the riboflavin transporter family.

The protein localises to the cell membrane. It catalyses the reaction riboflavin(in) = riboflavin(out). In terms of biological role, plasma membrane transporter mediating the uptake by cells of the water soluble vitamin B2/riboflavin that plays a key role in biochemical oxidation-reduction reactions of the carbohydrate, lipid, and amino acid metabolism. The chain is Solute carrier family 52, riboflavin transporter, member 3-B (slc52a3b) from Danio rerio (Zebrafish).